We begin with the raw amino-acid sequence, 413 residues long: S-adenosylmethionine synthase (413 aa).

His-15 is an ATP binding site. Asp-17 is a Mg(2+) binding site. Glu-43 is a binding site for K(+). Positions 56 and 100 each coordinate L-methionine. The segment at 100-110 (QSPDISQGVND) is flexible loop. Residues 171–173 (DGK), 248–249 (KF), Asp-257, 263–264 (RK), Ala-280, and Lys-284 contribute to the ATP site. Position 257 (Asp-257) interacts with L-methionine. L-methionine is bound at residue Lys-288.

Belongs to the AdoMet synthase family. Homotetramer; dimer of dimers. Mg(2+) is required as a cofactor. Requires K(+) as cofactor.

Its subcellular location is the cytoplasm. It carries out the reaction L-methionine + ATP + H2O = S-adenosyl-L-methionine + phosphate + diphosphate. It functions in the pathway amino-acid biosynthesis; S-adenosyl-L-methionine biosynthesis; S-adenosyl-L-methionine from L-methionine: step 1/1. Functionally, catalyzes the formation of S-adenosylmethionine (AdoMet) from methionine and ATP. The overall synthetic reaction is composed of two sequential steps, AdoMet formation and the subsequent tripolyphosphate hydrolysis which occurs prior to release of AdoMet from the enzyme. The chain is S-adenosylmethionine synthase from Prochlorococcus marinus (strain MIT 9301).